We begin with the raw amino-acid sequence, 342 residues long: Uroporphyrinogen decarboxylase (342 aa).

Substrate contacts are provided by residues 22-26 (RQAGR), Phe-42, Asp-72, Tyr-146, Ser-201, and His-317.

It belongs to the uroporphyrinogen decarboxylase family. In terms of assembly, homodimer.

The protein localises to the cytoplasm. The enzyme catalyses uroporphyrinogen III + 4 H(+) = coproporphyrinogen III + 4 CO2. It functions in the pathway porphyrin-containing compound metabolism; protoporphyrin-IX biosynthesis; coproporphyrinogen-III from 5-aminolevulinate: step 4/4. Its function is as follows. Catalyzes the decarboxylation of four acetate groups of uroporphyrinogen-III to yield coproporphyrinogen-III. The chain is Uroporphyrinogen decarboxylase from Orientia tsutsugamushi (strain Ikeda) (Rickettsia tsutsugamushi).